The sequence spans 193 residues: 3-isopropylmalate dehydratase small subunit (193 aa).

Belongs to the LeuD family. LeuD type 1 subfamily. As to quaternary structure, heterodimer of LeuC and LeuD.

It catalyses the reaction (2R,3S)-3-isopropylmalate = (2S)-2-isopropylmalate. The protein operates within amino-acid biosynthesis; L-leucine biosynthesis; L-leucine from 3-methyl-2-oxobutanoate: step 2/4. Catalyzes the isomerization between 2-isopropylmalate and 3-isopropylmalate, via the formation of 2-isopropylmaleate. The polypeptide is 3-isopropylmalate dehydratase small subunit (Bacillus cytotoxicus (strain DSM 22905 / CIP 110041 / 391-98 / NVH 391-98)).